We begin with the raw amino-acid sequence, 642 residues long: Replication protein E1 (642 aa).

The Nuclear localization signal signature appears at Lys83 to Lys85. A phosphoserine; by host mark is found at Ser89, Ser93, and Ser107. The Nuclear export signal motif lies at Leu106 to Leu115. The segment at Gly179 to Asp345 is DNA-binding region. Residues Ile444–Val594 enclose the SF3 helicase domain. An ATP-binding site is contributed by Gly470–Ser477. Lys551 is covalently cross-linked (Glycyl lysine isopeptide (Lys-Gly) (interchain with G-Cter in SUMO)).

This sequence belongs to the papillomaviridae E1 protein family. Can form hexamers. Interacts with E2 protein; this interaction increases E1 DNA binding specificity. Interacts with host DNA polymerase subunit POLA2. Interacts with host single stranded DNA-binding protein RPA1. Interacts with host TOP1; this interaction stimulates the enzymatic activity of TOP1. Phosphorylated. Post-translationally, sumoylated.

The protein localises to the host nucleus. The catalysed reaction is Couples ATP hydrolysis with the unwinding of duplex DNA by translocating in the 3'-5' direction.. It catalyses the reaction ATP + H2O = ADP + phosphate + H(+). Functionally, ATP-dependent DNA 3'-5' helicase required for initiation of viral DNA replication. It forms a complex with the viral E2 protein. The E1-E2 complex binds to the replication origin which contains binding sites for both proteins. During the initial step, a dimer of E1 interacts with a dimer of protein E2 leading to a complex that binds the viral origin of replication with high specificity. Then, a second dimer of E1 displaces the E2 dimer in an ATP-dependent manner to form the E1 tetramer. Following this, two E1 monomers are added to each half of the site, which results in the formation of two E1 trimers on the viral ori. Subsequently, two hexamers will be created. The double hexamer acts as a bi-directional helicase machinery and unwinds the viral DNA and then recruits the host DNA polymerase to start replication. This chain is Replication protein E1, found in Human papillomavirus type 32.